Here is a 228-residue protein sequence, read N- to C-terminus: 2,3-bisphosphoglycerate-dependent phosphoglycerate mutase (228 aa).

Residues 7-14 (RHGESAWN), 20-21 (TG), R59, 86-89 (ERHY), K97, 113-114 (RR), and 182-183 (GN) each bind substrate. H8 functions as the Tele-phosphohistidine intermediate in the catalytic mechanism. Residue E86 is the Proton donor/acceptor of the active site.

It belongs to the phosphoglycerate mutase family. BPG-dependent PGAM subfamily.

The enzyme catalyses (2R)-2-phosphoglycerate = (2R)-3-phosphoglycerate. It participates in carbohydrate degradation; glycolysis; pyruvate from D-glyceraldehyde 3-phosphate: step 3/5. Catalyzes the interconversion of 2-phosphoglycerate and 3-phosphoglycerate. The sequence is that of 2,3-bisphosphoglycerate-dependent phosphoglycerate mutase from Fusobacterium nucleatum subsp. nucleatum (strain ATCC 25586 / DSM 15643 / BCRC 10681 / CIP 101130 / JCM 8532 / KCTC 2640 / LMG 13131 / VPI 4355).